A 130-amino-acid chain; its full sequence is Protein ApaG (130 aa).

The ApaG domain occupies 3–127 (KAETRGISVT…FSLDVPHVRR (125 aa)).

This is Protein ApaG from Methylobacterium sp. (strain 4-46).